The chain runs to 130 residues: Large ribosomal subunit protein bL12 (130 aa).

The protein belongs to the bacterial ribosomal protein bL12 family. Homodimer. Part of the ribosomal stalk of the 50S ribosomal subunit. Forms a multimeric L10(L12)X complex, where L10 forms an elongated spine to which 2 to 4 L12 dimers bind in a sequential fashion. Binds GTP-bound translation factors.

Forms part of the ribosomal stalk which helps the ribosome interact with GTP-bound translation factors. Is thus essential for accurate translation. The polypeptide is Large ribosomal subunit protein bL12 (Chlamydia muridarum (strain MoPn / Nigg)).